A 162-amino-acid chain; its full sequence is MDILGEIVNVDEYVEKLELQKNDIGFYKCPFCDYTNADAKVVRKHVKSKHLEEIEKELKKLESQKSKNNGKKQTGQKKQGKGKKQPKRVRETCVSTQERKDYVLFFCHNHKVRLHLANGEVLEGKCCCKDPYTVLVDVGKGDVVIVNKAYIVKYVPLDLEKL.

Residues 29 to 50 (CPFCDYTNADAKVVRKHVKSKH) form a C2H2-type zinc finger. The disordered stretch occupies residues 60–93 (KLESQKSKNNGKKQTGQKKQGKGKKQPKRVRETC). Residues 68-87 (NNGKKQTGQKKQGKGKKQPK) show a composition bias toward basic residues.

The protein to M.jannaschii MJECS06.

This is an uncharacterized protein from Methanocaldococcus jannaschii (strain ATCC 43067 / DSM 2661 / JAL-1 / JCM 10045 / NBRC 100440) (Methanococcus jannaschii).